A 147-amino-acid polypeptide reads, in one-letter code: UPF0260 protein CJA_2436 (147 aa).

Belongs to the UPF0260 family.

This Cellvibrio japonicus (strain Ueda107) (Pseudomonas fluorescens subsp. cellulosa) protein is UPF0260 protein CJA_2436.